A 292-amino-acid polypeptide reads, in one-letter code: 4-hydroxy-tetrahydrodipicolinate synthase (292 aa).

Threonine 45 provides a ligand contact to pyruvate. Catalysis depends on tyrosine 133, which acts as the Proton donor/acceptor. Residue lysine 161 is the Schiff-base intermediate with substrate of the active site. Pyruvate is bound at residue isoleucine 203.

It belongs to the DapA family. As to quaternary structure, homotetramer; dimer of dimers.

It localises to the cytoplasm. The enzyme catalyses L-aspartate 4-semialdehyde + pyruvate = (2S,4S)-4-hydroxy-2,3,4,5-tetrahydrodipicolinate + H2O + H(+). It participates in amino-acid biosynthesis; L-lysine biosynthesis via DAP pathway; (S)-tetrahydrodipicolinate from L-aspartate: step 3/4. In terms of biological role, catalyzes the condensation of (S)-aspartate-beta-semialdehyde [(S)-ASA] and pyruvate to 4-hydroxy-tetrahydrodipicolinate (HTPA). The chain is 4-hydroxy-tetrahydrodipicolinate synthase from Salmonella arizonae (strain ATCC BAA-731 / CDC346-86 / RSK2980).